We begin with the raw amino-acid sequence, 182 residues long: Dual-action ribosomal maturation protein DarP (182 aa).

The protein belongs to the DarP family.

The protein resides in the cytoplasm. Its function is as follows. Member of a network of 50S ribosomal subunit biogenesis factors which assembles along the 30S-50S interface, preventing incorrect 23S rRNA structures from forming. Promotes peptidyl transferase center (PTC) maturation. The sequence is that of Dual-action ribosomal maturation protein DarP from Serratia proteamaculans (strain 568).